The primary structure comprises 377 residues: Phosphatidylserine decarboxylase proenzyme, mitochondrial (377 aa).

The transit peptide at 1 to 34 (MMPLFNVLRSARMLPAVSKKVVSPPMMLRSVREL) directs the protein to the mitochondrion. Over 35–61 (TNQSKNVYATKEVIIGASQKKKRSWVK) the chain is Mitochondrial matrix. A helical transmembrane segment spans residues 62-80 (WLSVSTLIIGGASYVGYLF). Over 81 to 377 (TPDWREIVDS…YGQSLVADGV (297 aa)) the chain is Mitochondrial intermembrane. Active-site charge relay system; for autoendoproteolytic cleavage activity residues include D181, H238, and S344. Residue S344 is the Schiff-base intermediate with substrate; via pyruvic acid; for decarboxylase activity of the active site. The residue at position 344 (S344) is a Pyruvic acid (Ser); by autocatalysis.

Belongs to the phosphatidylserine decarboxylase family. PSD-B subfamily. Eukaryotic type I sub-subfamily. Heterodimer of a large membrane-associated beta subunit and a small pyruvoyl-containing alpha subunit. It depends on pyruvate as a cofactor. In terms of processing, is synthesized initially as an inactive proenzyme. Formation of the active enzyme involves a self-maturation process in which the active site pyruvoyl group is generated from an internal serine residue via an autocatalytic post-translational modification. Two non-identical subunits are generated from the proenzyme in this reaction, and the pyruvate is formed at the N-terminus of the alpha chain, which is derived from the carboxyl end of the proenzyme. The autoendoproteolytic cleavage occurs by a canonical serine protease mechanism, in which the side chain hydroxyl group of the serine supplies its oxygen atom to form the C-terminus of the beta chain, while the remainder of the serine residue undergoes an oxidative deamination to produce ammonia and the pyruvoyl prosthetic group on the alpha chain. During this reaction, the Ser that is part of the protease active site of the proenzyme becomes the pyruvoyl prosthetic group, which constitutes an essential element of the active site of the mature decarboxylase.

The protein resides in the mitochondrion inner membrane. It carries out the reaction a 1,2-diacyl-sn-glycero-3-phospho-L-serine + H(+) = a 1,2-diacyl-sn-glycero-3-phosphoethanolamine + CO2. It functions in the pathway phospholipid metabolism; phosphatidylethanolamine biosynthesis; phosphatidylethanolamine from CDP-diacylglycerol: step 2/2. Catalyzes the formation of phosphatidylethanolamine (PtdEtn) from phosphatidylserine (PtdSer). Plays a central role in phospholipid metabolism and in the interorganelle trafficking of phosphatidylserine. This Caenorhabditis elegans protein is Phosphatidylserine decarboxylase proenzyme, mitochondrial.